Reading from the N-terminus, the 443-residue chain is Cobyrinate a,c-diamide synthase (443 aa).

Residues 244–435 form the GATase cobBQ-type domain; it reads KVSVAMDSAF…AHIHFLSNPR (192 aa). Catalysis depends on Cys-327, which acts as the Nucleophile.

It belongs to the CobB/CbiA family. Mg(2+) serves as cofactor.

It catalyses the reaction cob(II)yrinate + 2 L-glutamine + 2 ATP + 2 H2O = cob(II)yrinate a,c diamide + 2 L-glutamate + 2 ADP + 2 phosphate + 2 H(+). It functions in the pathway cofactor biosynthesis; adenosylcobalamin biosynthesis; cob(II)yrinate a,c-diamide from sirohydrochlorin (anaerobic route): step 10/10. Catalyzes the ATP-dependent amidation of the two carboxylate groups at positions a and c of cobyrinate, using either L-glutamine or ammonia as the nitrogen source. This chain is Cobyrinate a,c-diamide synthase, found in Thermoplasma acidophilum (strain ATCC 25905 / DSM 1728 / JCM 9062 / NBRC 15155 / AMRC-C165).